The following is a 337-amino-acid chain: Ornithine carbamoyltransferase, catabolic (337 aa).

Residues 57 to 60, Gln-84, Arg-108, and 135 to 138 each bind carbamoyl phosphate; these read STRT and HPTQ. L-ornithine-binding positions include Asn-167, Asp-231, and 235-236; that span reads SM. Carbamoyl phosphate is bound by residues 272-273 and Arg-317; that span reads CL.

This sequence belongs to the aspartate/ornithine carbamoyltransferase superfamily. OTCase family.

It is found in the cytoplasm. The catalysed reaction is carbamoyl phosphate + L-ornithine = L-citrulline + phosphate + H(+). It functions in the pathway amino-acid degradation; L-arginine degradation via ADI pathway; carbamoyl phosphate from L-arginine: step 2/2. Functionally, reversibly catalyzes the transfer of the carbamoyl group from carbamoyl phosphate (CP) to the N(epsilon) atom of ornithine (ORN) to produce L-citrulline. This chain is Ornithine carbamoyltransferase, catabolic (arcB), found in Streptococcus agalactiae.